The sequence spans 403 residues: Probable tRNA sulfurtransferase (403 aa).

The 106-residue stretch at 61 to 166 folds into the THUMP domain; that stretch reads EAIAESLKDV…SGYSYIMCDE (106 aa). Residues 184 to 185, 209 to 210, Arg-266, Gly-288, and Gln-297 contribute to the ATP site; these read LL and HF.

This sequence belongs to the ThiI family.

Its subcellular location is the cytoplasm. It catalyses the reaction [ThiI sulfur-carrier protein]-S-sulfanyl-L-cysteine + a uridine in tRNA + 2 reduced [2Fe-2S]-[ferredoxin] + ATP + H(+) = [ThiI sulfur-carrier protein]-L-cysteine + a 4-thiouridine in tRNA + 2 oxidized [2Fe-2S]-[ferredoxin] + AMP + diphosphate. It carries out the reaction [ThiS sulfur-carrier protein]-C-terminal Gly-Gly-AMP + S-sulfanyl-L-cysteinyl-[cysteine desulfurase] + AH2 = [ThiS sulfur-carrier protein]-C-terminal-Gly-aminoethanethioate + L-cysteinyl-[cysteine desulfurase] + A + AMP + 2 H(+). It participates in cofactor biosynthesis; thiamine diphosphate biosynthesis. Catalyzes the ATP-dependent transfer of a sulfur to tRNA to produce 4-thiouridine in position 8 of tRNAs, which functions as a near-UV photosensor. Also catalyzes the transfer of sulfur to the sulfur carrier protein ThiS, forming ThiS-thiocarboxylate. This is a step in the synthesis of thiazole, in the thiamine biosynthesis pathway. The sulfur is donated as persulfide by IscS. The polypeptide is Probable tRNA sulfurtransferase (Bacillus cytotoxicus (strain DSM 22905 / CIP 110041 / 391-98 / NVH 391-98)).